Reading from the N-terminus, the 329-residue chain is Acetyl-coenzyme A carboxylase carboxyl transferase subunit alpha (329 aa).

The region spanning 40–294 (QLETLAARRR…REAIERHLDE (255 aa)) is the CoA carboxyltransferase C-terminal domain.

This sequence belongs to the AccA family. Acetyl-CoA carboxylase is a heterohexamer composed of biotin carboxyl carrier protein (AccB), biotin carboxylase (AccC) and two subunits each of ACCase subunit alpha (AccA) and ACCase subunit beta (AccD).

The protein localises to the cytoplasm. It catalyses the reaction N(6)-carboxybiotinyl-L-lysyl-[protein] + acetyl-CoA = N(6)-biotinyl-L-lysyl-[protein] + malonyl-CoA. Its pathway is lipid metabolism; malonyl-CoA biosynthesis; malonyl-CoA from acetyl-CoA: step 1/1. Component of the acetyl coenzyme A carboxylase (ACC) complex. First, biotin carboxylase catalyzes the carboxylation of biotin on its carrier protein (BCCP) and then the CO(2) group is transferred by the carboxyltransferase to acetyl-CoA to form malonyl-CoA. The polypeptide is Acetyl-coenzyme A carboxylase carboxyl transferase subunit alpha (Prochlorococcus marinus (strain MIT 9313)).